The chain runs to 283 residues: Putative 4-diphosphocytidyl-2-C-methyl-D-erythritol kinase (283 aa).

K11 is a catalytic residue. 95-105 (PVCAGMGGGSS) is a binding site for ATP. D137 is an active-site residue.

It belongs to the GHMP kinase family. IspE subfamily.

It catalyses the reaction 4-CDP-2-C-methyl-D-erythritol + ATP = 4-CDP-2-C-methyl-D-erythritol 2-phosphate + ADP + H(+). Functionally, catalyzes the phosphorylation of the position 2 hydroxy group of 4-diphosphocytidyl-2C-methyl-D-erythritol. This is Putative 4-diphosphocytidyl-2-C-methyl-D-erythritol kinase from Streptococcus equi subsp. equi (strain 4047).